The sequence spans 270 residues: Phthiotriol/phenolphthiotriol dimycocerosates methyltransferase (270 aa).

Belongs to the methyltransferase superfamily. Phthiotriol/phenolphthiotriol dimycocerosates methyltransferase family.

In terms of biological role, catalyzes the methylation of the lipid moiety of the intermediate compounds phthiotriol and glycosylated phenolphthiotriol dimycoserosates to form phthiocerol dimycocerosates (DIM A) and glycosylated phenolphthiocerol dimycocerosates (PGL). This chain is Phthiotriol/phenolphthiotriol dimycocerosates methyltransferase, found in Mycobacterium leprae (strain TN).